A 796-amino-acid polypeptide reads, in one-letter code: Molybdenum cofactor sulfurase (796 aa).

Lysine 246 is modified (N6-(pyridoxal phosphate)lysine). The active site involves cysteine 418. Positions 650–796 constitute an MOSC domain; it reads LRLLRQSSQR…LTCGDVVVVT (147 aa). Serine 752 is subject to Phosphoserine.

The protein belongs to the class-V pyridoxal-phosphate-dependent aminotransferase family. MOCOS subfamily. It depends on pyridoxal 5'-phosphate as a cofactor.

The catalysed reaction is Mo-molybdopterin + L-cysteine + AH2 = thio-Mo-molybdopterin + L-alanine + A + H2O. Sulfurates the molybdenum cofactor. Sulfation of molybdenum is essential for xanthine dehydrogenase (XDH) and aldehyde oxidase (ADO) enzymes in which molybdenum cofactor is liganded by 1 oxygen and 1 sulfur atom in active form. The chain is Molybdenum cofactor sulfurase from Drosophila persimilis (Fruit fly).